Consider the following 295-residue polypeptide: Bifunctional protein FolD (295 aa).

Residues 166-168 (GRS), serine 195, and isoleucine 236 each bind NADP(+).

This sequence belongs to the tetrahydrofolate dehydrogenase/cyclohydrolase family. In terms of assembly, homodimer.

The enzyme catalyses (6R)-5,10-methylene-5,6,7,8-tetrahydrofolate + NADP(+) = (6R)-5,10-methenyltetrahydrofolate + NADPH. It carries out the reaction (6R)-5,10-methenyltetrahydrofolate + H2O = (6R)-10-formyltetrahydrofolate + H(+). It participates in one-carbon metabolism; tetrahydrofolate interconversion. Catalyzes the oxidation of 5,10-methylenetetrahydrofolate to 5,10-methenyltetrahydrofolate and then the hydrolysis of 5,10-methenyltetrahydrofolate to 10-formyltetrahydrofolate. The sequence is that of Bifunctional protein FolD from Chlorobium luteolum (strain DSM 273 / BCRC 81028 / 2530) (Pelodictyon luteolum).